Here is a 307-residue protein sequence, read N- to C-terminus: Alginate lyase (307 aa).

An N-terminal signal peptide occupies residues 1-20 (MLKSGVMVASLCLFSVPSRA).

Belongs to the polysaccharide lyase 7 family.

The protein resides in the secreted. It catalyses the reaction Eliminative cleavage of alginate to give oligosaccharides with 4-deoxy-alpha-L-erythro-hex-4-enuronosyl groups at their non-reducing ends and beta-D-mannuronate at their reducing end.. Functionally, degrades alginates that contain guluronic acid. The sequence is that of Alginate lyase (alyA) from Klebsiella pneumoniae.